The primary structure comprises 2406 residues: Highly reducing polyketide synthase dmxL2 (2406 aa).

The Ketosynthase family 3 (KS3) domain occupies 1–399 (MEAFWSASKK…GTNAHAVLDD (399 aa)). The active site involves cysteine 130. The For beta-ketoacyl synthase activity role is filled by cysteine 130. The segment at 414–476 (GHASNGTNGT…GPTDGPTSRP (63 aa)) is disordered. Residues 417–448 (SNGTNGTLTNGHILNGEHTSNGMNGTLTNGHA) show a composition bias toward polar residues. The interval 574–911 (FVFTGQGAQW…LAGSLFTQGY (338 aa)) is malonyl-CoA:ACP transacylase (MAT) domain. Serine 665 acts as the For malonyltransferase activity in catalysis. The segment at 962 to 1096 (PSLLGSPSPS…GLLVIEYEAA (135 aa)) is N-terminal hotdog fold. A PKS/mFAS DH domain is found at 962–1278 (PSLLGSPSPS…CAEIAGASSN (317 aa)). Residues 964–1273 (LLGSPSPSLA…IEGFLCAEIA (310 aa)) form a dehydratase (DH) domain region. Histidine 994 functions as the Proton acceptor; for dehydratase activity in the catalytic mechanism. The segment at 1124 to 1278 (VHRLDPSGFY…CAEIAGASSN (155 aa)) is C-terminal hotdog fold. The active-site Proton donor; for dehydratase activity is aspartate 1189. Positions 1694–2006 (GMLGSVCLEP…TGKHLGKIAL (313 aa)) are enoylreductase (ER) domain. Positions 2032-2210 (GVYLLVGGLG…TTVDLGIMRD (179 aa)) are ketoreductase (KR) domain. The 78-residue stretch at 2318 to 2395 (EASDSVLEAL…TFCNRIAAKS (78 aa)) folds into the Carrier domain. Serine 2355 bears the O-(pantetheine 4'-phosphoryl)serine mark.

It participates in secondary metabolite biosynthesis. Highly reducing polyketide synthase; part of the gene cluster that mediates the biosynthesis of the dimeric xanthones cryptosporioptides. The pathway begins with the synthesis of atrochrysone thioester by the polyketide synthase dmx-nrPKS. The atrochrysone carboxyl ACP thioesterase dmxR1 then breaks the thioester bond and releases the atrochrysone carboxylic acid from dmx-nrPKS. Atrochrysone carboxylic acid is decarboxylated by the decarboxylase dmxR15, and oxidized by the anthrone oxygenase dmxR16 to yield emodin. Emodin is then reduced to emodin hydroquinone by the oxidoreductase dmxR7. A-ring reduction by the short chain dehydrogenase dmxR18, dehydration by the scytalone dehydratase-like protein dmxR17 and probable spontaneous re-oxidation, results in overall deoxygenation to chrysophanol. Baeyer-Villiger oxidation by the Baeyer-Villiger monooxygenase (BVMO) dmxR6 then yields monodictylactone in equilibrium with monodictyphenone. In the case of the cryptosporioptides biosynthesis, monodictylactone is reduced at C-12 to an alcohol (by the short chain dehydrogenases dmxR12 or dmxR8) and hydroxylated at C-5 by dmxR9, yielding the electron-rich aromatic which could eliminate H(2)O to form the ortho-quinonemethide, followed by tautomerisation to paraquinone and complete the formal reduction to produce the 10-methylgroup. Conjugate addition of C-4a-OH to the resulting paraquinone by the monooxygenase dmxR10 then gives cyclohexadienone, which is then reduced at C-5 by the short chain dehydrogenase dmxR3 to give the dihydroxanthone. The 6,7-epoxide in the cryptosporioptides could be introduced by the cytochrome P450 monooxygenase dmxL3. The highly reducing PKS dmxL2 manufactures butyrate, which is further carboxylated by dmxL1 to form ethylmalonate. It is not yet clear whether the carboxylation occurs while the butyrate is attached to the ACP of dmxL2, but this unusual fungal metabolite could then be esterified to O-5 by the O-acetyltransferase dmxR13. Finally, dimerization performed by dmxR5 gives the observed dimers cryptosporioptides A, B and C as the final products of the pathway. This Cryptosporiopsis sp. (strain 8999) protein is Highly reducing polyketide synthase dmxL2.